We begin with the raw amino-acid sequence, 95 residues long: Large ribosomal subunit protein uL22c (95 aa).

This sequence belongs to the universal ribosomal protein uL22 family. As to quaternary structure, part of the 50S ribosomal subunit.

The protein resides in the plastid. It is found in the chloroplast. Its function is as follows. This protein binds specifically to 23S rRNA. The globular domain of the protein is located near the polypeptide exit tunnel on the outside of the subunit, while an extended beta-hairpin is found that lines the wall of the exit tunnel in the center of the 70S ribosome. This Cyanidioschyzon merolae (strain NIES-3377 / 10D) (Unicellular red alga) protein is Large ribosomal subunit protein uL22c (rpl22).